The sequence spans 641 residues: Macrolide export ATP-binding/permease protein MacB (641 aa).

The ABC transporter domain occupies 2–240; it reads IKLENIKKSF…LKQNLKEIKP (239 aa). 38 to 45 contacts ATP; it reads GQSGSGKS. 4 helical membrane-spanning segments follow: residues 268-288, 516-536, 565-585, and 601-621; these read FLTM…VALA, LLIS…VMNI, FLIE…GLAY, and IFST…GIVF.

The protein belongs to the ABC transporter superfamily. Macrolide exporter (TC 3.A.1.122) family. As to quaternary structure, homodimer.

It is found in the cell inner membrane. Non-canonical ABC transporter that contains transmembrane domains (TMD), which form a pore in the inner membrane, and an ATP-binding domain (NBD), which is responsible for energy generation. Confers resistance against macrolides. The protein is Macrolide export ATP-binding/permease protein MacB of Campylobacter fetus subsp. fetus (strain 82-40).